Reading from the N-terminus, the 245-residue chain is 4-hydroxy-tetrahydrodipicolinate reductase (245 aa).

Residues 7–12 (GAKGKV), Asp-33, 75–77 (GTT), and 102–105 (APNF) each bind NAD(+). The active-site Proton donor/acceptor is His-132. His-133 lines the (S)-2,3,4,5-tetrahydrodipicolinate pocket. Lys-136 functions as the Proton donor in the catalytic mechanism. A (S)-2,3,4,5-tetrahydrodipicolinate-binding site is contributed by 142 to 143 (GT).

It belongs to the DapB family.

It is found in the cytoplasm. It catalyses the reaction (S)-2,3,4,5-tetrahydrodipicolinate + NAD(+) + H2O = (2S,4S)-4-hydroxy-2,3,4,5-tetrahydrodipicolinate + NADH + H(+). It carries out the reaction (S)-2,3,4,5-tetrahydrodipicolinate + NADP(+) + H2O = (2S,4S)-4-hydroxy-2,3,4,5-tetrahydrodipicolinate + NADPH + H(+). The protein operates within amino-acid biosynthesis; L-lysine biosynthesis via DAP pathway; (S)-tetrahydrodipicolinate from L-aspartate: step 4/4. In terms of biological role, catalyzes the conversion of 4-hydroxy-tetrahydrodipicolinate (HTPA) to tetrahydrodipicolinate. The polypeptide is 4-hydroxy-tetrahydrodipicolinate reductase (Mycolicibacterium paratuberculosis (strain ATCC BAA-968 / K-10) (Mycobacterium paratuberculosis)).